The primary structure comprises 310 residues: p-hydroxybenzoic acid efflux pump subunit AaeA (310 aa).

The chain crosses the membrane as a helical span at residues 12-32 (AITVVLVILAFIAIFNAWVYY).

This sequence belongs to the membrane fusion protein (MFP) (TC 8.A.1) family.

Its subcellular location is the cell inner membrane. Functionally, forms an efflux pump with AaeB. This is p-hydroxybenzoic acid efflux pump subunit AaeA from Escherichia coli O9:H4 (strain HS).